The following is a 56-amino-acid chain: Large ribosomal subunit protein uL30 (56 aa).

Belongs to the universal ribosomal protein uL30 family. In terms of assembly, part of the 50S ribosomal subunit.

The polypeptide is Large ribosomal subunit protein uL30 (Oleidesulfovibrio alaskensis (strain ATCC BAA-1058 / DSM 17464 / G20) (Desulfovibrio alaskensis)).